The sequence spans 275 residues: Diaminopimelate epimerase (275 aa).

Residues Asn-13, Gln-46, and Asn-66 each coordinate substrate. The Proton donor role is filled by Cys-75. Residues 76 to 77 (GN), Asn-159, Asn-192, and 210 to 211 (ER) contribute to the substrate site. The active-site Proton acceptor is Cys-219. 220–221 (GT) is a binding site for substrate.

It belongs to the diaminopimelate epimerase family. As to quaternary structure, homodimer.

The protein resides in the cytoplasm. The catalysed reaction is (2S,6S)-2,6-diaminopimelate = meso-2,6-diaminopimelate. It participates in amino-acid biosynthesis; L-lysine biosynthesis via DAP pathway; DL-2,6-diaminopimelate from LL-2,6-diaminopimelate: step 1/1. Its function is as follows. Catalyzes the stereoinversion of LL-2,6-diaminopimelate (L,L-DAP) to meso-diaminopimelate (meso-DAP), a precursor of L-lysine and an essential component of the bacterial peptidoglycan. In Psychromonas ingrahamii (strain DSM 17664 / CCUG 51855 / 37), this protein is Diaminopimelate epimerase.